Here is a 731-residue protein sequence, read N- to C-terminus: Radial spoke head 10 homolog B (731 aa).

Residues Met1–His69 form a disordered region. Over residues Met7–Pro17 the composition is skewed to polar residues. 2 stretches are compositionally biased toward low complexity: residues Thr18–Val36 and Ser46–Ser57. 10 MORN repeats span residues Tyr86 to Val108, Tyr109 to Lys131, Tyr132 to Thr154, Tyr155 to Thr177, Tyr179 to Thr201, Tyr204 to Val226, Tyr227 to Gln249, Tyr251 to Ala273, Tyr284 to Leu306, and Tyr307 to Val329. 2 disordered regions span residues Thr353–Gly377 and Lys709–His731. A compositionally biased stretch (low complexity) spans Ser363–Gly377. Residues Val722 to His731 show a composition bias toward polar residues.

The protein localises to the cytoplasm. It is found in the cytoskeleton. Its subcellular location is the cilium axoneme. It localises to the cell projection. The protein resides in the cilium. The protein localises to the flagellum. Functionally, may function as part of axonemal radial spoke complexes. Radial spoke complexes are important for ciliary motility. The chain is Radial spoke head 10 homolog B (rsph10b) from Danio rerio (Zebrafish).